The following is a 584-amino-acid chain: J protein JJJ2 (584 aa).

The J domain occupies 13–77 (TYYSILGLTS…DQKLRYDRDL (65 aa)). A disordered region spans residues 216-312 (YSEDPNSCLG…FSSGSHDSNL (97 aa)). Ser229 bears the Phosphoserine mark. Positions 241–253 (QQQQQQQQQQQQQ) are enriched in low complexity. The span at 269–282 (KDNKESKRESRVSP) shows a compositional bias: basic and acidic residues. Residues 299–312 (KTSTFSSGSHDSNL) show a composition bias toward polar residues.

It is found in the cytoplasm. Its subcellular location is the nucleus. This is J protein JJJ2 (JJJ2) from Saccharomyces cerevisiae (strain YJM789) (Baker's yeast).